Reading from the N-terminus, the 142-residue chain is Transcriptional regulator MraZ (142 aa).

2 consecutive SpoVT-AbrB domains span residues 5–47 (NYQH…TNQE) and 76–119 (SLTV…DINA).

The protein belongs to the MraZ family. In terms of assembly, forms oligomers.

It localises to the cytoplasm. Its subcellular location is the nucleoid. The polypeptide is Transcriptional regulator MraZ (Mycoplasmoides gallisepticum (strain R(low / passage 15 / clone 2)) (Mycoplasma gallisepticum)).